We begin with the raw amino-acid sequence, 301 residues long: Nucleotide-binding protein Noca_2527 (301 aa).

ATP is bound at residue 26–33; that stretch reads GMTGAGRS. 77–80 serves as a coordination point for GTP; the sequence is DVRS.

This sequence belongs to the RapZ-like family.

Its function is as follows. Displays ATPase and GTPase activities. The polypeptide is Nucleotide-binding protein Noca_2527 (Nocardioides sp. (strain ATCC BAA-499 / JS614)).